Consider the following 183-residue polypeptide: ATP synthase subunit delta (183 aa).

The protein belongs to the ATPase delta chain family. As to quaternary structure, F-type ATPases have 2 components, F(1) - the catalytic core - and F(0) - the membrane proton channel. F(1) has five subunits: alpha(3), beta(3), gamma(1), delta(1), epsilon(1). F(0) has three main subunits: a(1), b(2) and c(10-14). The alpha and beta chains form an alternating ring which encloses part of the gamma chain. F(1) is attached to F(0) by a central stalk formed by the gamma and epsilon chains, while a peripheral stalk is formed by the delta and b chains.

The protein resides in the cell inner membrane. Functionally, f(1)F(0) ATP synthase produces ATP from ADP in the presence of a proton or sodium gradient. F-type ATPases consist of two structural domains, F(1) containing the extramembraneous catalytic core and F(0) containing the membrane proton channel, linked together by a central stalk and a peripheral stalk. During catalysis, ATP synthesis in the catalytic domain of F(1) is coupled via a rotary mechanism of the central stalk subunits to proton translocation. In terms of biological role, this protein is part of the stalk that links CF(0) to CF(1). It either transmits conformational changes from CF(0) to CF(1) or is implicated in proton conduction. This is ATP synthase subunit delta from Syntrophobacter fumaroxidans (strain DSM 10017 / MPOB).